The primary structure comprises 237 residues: UPF0173 metal-dependent hydrolase HQ_3368A (237 aa).

This sequence belongs to the UPF0173 family.

The chain is UPF0173 metal-dependent hydrolase HQ_3368A from Haloquadratum walsbyi (strain DSM 16790 / HBSQ001).